A 198-amino-acid chain; its full sequence is ATP synthase subunit b (198 aa).

Residues 25-45 (PLSELLIGTLAFGLLVAFFFW) form a helical membrane-spanning segment.

The protein belongs to the ATPase B chain family. F-type ATPases have 2 components, F(1) - the catalytic core - and F(0) - the membrane proton channel. F(1) has five subunits: alpha(3), beta(3), gamma(1), delta(1), epsilon(1). F(0) has three main subunits: a(1), b(2) and c(10-14). The alpha and beta chains form an alternating ring which encloses part of the gamma chain. F(1) is attached to F(0) by a central stalk formed by the gamma and epsilon chains, while a peripheral stalk is formed by the delta and b chains.

The protein localises to the cell membrane. Functionally, f(1)F(0) ATP synthase produces ATP from ADP in the presence of a proton or sodium gradient. F-type ATPases consist of two structural domains, F(1) containing the extramembraneous catalytic core and F(0) containing the membrane proton channel, linked together by a central stalk and a peripheral stalk. During catalysis, ATP synthesis in the catalytic domain of F(1) is coupled via a rotary mechanism of the central stalk subunits to proton translocation. Its function is as follows. Component of the F(0) channel, it forms part of the peripheral stalk, linking F(1) to F(0). This Frankia alni (strain DSM 45986 / CECT 9034 / ACN14a) protein is ATP synthase subunit b.